The chain runs to 358 residues: MKKILALLVIAPLLVSCSGNKNQADNEAFIKDTNGFEILMGQFAHNIENIWGLKEVLIAGPKDYVKYTDQYQTRSHINFDAGTITVETIATTDPAAHLRQAIITTLLMGDDPGSIDLYSDANDIQISKEPFLYGQVLDNNGEPIRWEWRAAHFADYLLQNKMQKRTSGLHVIWSVTLQLVPNHLDKRAHKYLPLVRQSAEKYGVEESLILAIMQTESSFNPYAVSGSDALGLMQVVQHTAGRDVFKMKGKSGQPSRSYLFDPANNIDAGTAYLSILQNTYLGGIQNATSRRYAVITSYNGGAGSVLRVFSSDKNQAVNIINNMAPGDVFQTLTTKHPSGESRRYLVKVNSAQKSYRRH.

The first 16 residues, 1–16, serve as a signal peptide directing secretion; the sequence is MKKILALLVIAPLLVS. Residue cysteine 17 is the site of N-palmitoyl cysteine attachment. A lipid anchor (S-diacylglycerol cysteine) is attached at cysteine 17.

It belongs to the transglycosylase Slt family.

Its subcellular location is the cell outer membrane. The enzyme catalyses Exolytic cleavage of the (1-&gt;4)-beta-glycosidic linkage between N-acetylmuramic acid (MurNAc) and N-acetylglucosamine (GlcNAc) residues in peptidoglycan, from either the reducing or the non-reducing ends of the peptidoglycan chains, with concomitant formation of a 1,6-anhydrobond in the MurNAc residue.. Murein-degrading enzyme. May play a role in recycling of muropeptides during cell elongation and/or cell division. The protein is Membrane-bound lytic murein transglycosylase C of Yersinia enterocolitica serotype O:8 / biotype 1B (strain NCTC 13174 / 8081).